We begin with the raw amino-acid sequence, 144 residues long: Cell division protein SepF (144 aa).

This sequence belongs to the SepF family. Homodimer. Interacts with FtsZ.

It is found in the cytoplasm. In terms of biological role, cell division protein that is part of the divisome complex and is recruited early to the Z-ring. Probably stimulates Z-ring formation, perhaps through the cross-linking of FtsZ protofilaments. Its function overlaps with FtsA. This chain is Cell division protein SepF, found in Oceanobacillus iheyensis (strain DSM 14371 / CIP 107618 / JCM 11309 / KCTC 3954 / HTE831).